The chain runs to 126 residues: Holo-[acyl-carrier-protein] synthase (126 aa).

Residues Asp8 and Glu59 each contribute to the Mg(2+) site.

It belongs to the P-Pant transferase superfamily. AcpS family. The cofactor is Mg(2+).

It localises to the cytoplasm. It catalyses the reaction apo-[ACP] + CoA = holo-[ACP] + adenosine 3',5'-bisphosphate + H(+). Transfers the 4'-phosphopantetheine moiety from coenzyme A to a Ser of acyl-carrier-protein. The polypeptide is Holo-[acyl-carrier-protein] synthase (Rickettsia prowazekii (strain Madrid E)).